Consider the following 195-residue polypeptide: Transcription factor LBX2 (195 aa).

Disordered stretches follow at residues 1–89 (MNSV…KSRT) and 164–195 (PALP…QVDD). A DNA-binding region (homeobox) is located at residues 84 to 143 (RRKSRTAFTAQQVLELERRFVFQKYLAPSERDGLAARLGLANAQVVTWFQNRRAKLKRDV). Residues 186–195 (LSDEEIQVDD) are compositionally biased toward acidic residues.

In terms of tissue distribution, expressed in the developing urogenital system, eye and brain.

The protein resides in the nucleus. Transcription factor. The protein is Transcription factor LBX2 (Lbx2) of Mus musculus (Mouse).